We begin with the raw amino-acid sequence, 1043 residues long: Unconventional myosin-Ia (1043 aa).

Positions 8-694 (VGVEDLILLE…TLFYLEEQRR (687 aa)) constitute a Myosin motor domain. An ATP-binding site is contributed by 101 to 108 (GESGAGKT). Positions 571–593 (VAVLMKNLYSKNPNYIRCIKPND) are actin-binding. 3 consecutive IQ domains span residues 697 to 719 (LQQL…HYQQ), 720 to 742 (MRKS…HYGK), and 743 to 772 (IRSS…SGAA). The region spanning 858 to 1042 (KASYPQSVPI…KGSNAMEVTV (185 aa)) is the TH1 domain.

It belongs to the TRAFAC class myosin-kinesin ATPase superfamily. Myosin family. In terms of processing, phosphorylated by ALPK1.

In terms of biological role, involved in directing the movement of organelles along actin filaments. The sequence is that of Unconventional myosin-Ia (Myo1a) from Mus musculus (Mouse).